Here is a 351-residue protein sequence, read N- to C-terminus: Thiamine-phosphate synthase (351 aa).

Residues 1-128 (MLNSNTKDHE…SKIASEIRYE (128 aa)) are unknown. The tract at residues 129–351 (IYTVEIDLLS…MILKELSHEN (223 aa)) is thiamine-phosphate synthase. 4-amino-2-methyl-5-(diphosphooxymethyl)pyrimidine contacts are provided by residues 180 to 184 (QHRFK) and Asn-212. Mg(2+)-binding residues include Asp-213 and Asp-232. Ser-251 is a binding site for 4-amino-2-methyl-5-(diphosphooxymethyl)pyrimidine. 277-279 (TTT) is a binding site for 2-[(2R,5Z)-2-carboxy-4-methylthiazol-5(2H)-ylidene]ethyl phosphate. 4-amino-2-methyl-5-(diphosphooxymethyl)pyrimidine is bound at residue Lys-280. A 2-[(2R,5Z)-2-carboxy-4-methylthiazol-5(2H)-ylidene]ethyl phosphate-binding site is contributed by Gly-307.

The protein belongs to the thiamine-phosphate synthase family. The cofactor is Mg(2+).

It carries out the reaction 2-[(2R,5Z)-2-carboxy-4-methylthiazol-5(2H)-ylidene]ethyl phosphate + 4-amino-2-methyl-5-(diphosphooxymethyl)pyrimidine + 2 H(+) = thiamine phosphate + CO2 + diphosphate. It catalyses the reaction 2-(2-carboxy-4-methylthiazol-5-yl)ethyl phosphate + 4-amino-2-methyl-5-(diphosphooxymethyl)pyrimidine + 2 H(+) = thiamine phosphate + CO2 + diphosphate. The enzyme catalyses 4-methyl-5-(2-phosphooxyethyl)-thiazole + 4-amino-2-methyl-5-(diphosphooxymethyl)pyrimidine + H(+) = thiamine phosphate + diphosphate. The protein operates within cofactor biosynthesis; thiamine diphosphate biosynthesis; thiamine phosphate from 4-amino-2-methyl-5-diphosphomethylpyrimidine and 4-methyl-5-(2-phosphoethyl)-thiazole: step 1/1. Its function is as follows. Condenses 4-methyl-5-(beta-hydroxyethyl)thiazole monophosphate (THZ-P) and 2-methyl-4-amino-5-hydroxymethyl pyrimidine pyrophosphate (HMP-PP) to form thiamine monophosphate (TMP). This chain is Thiamine-phosphate synthase, found in Prochlorococcus marinus (strain AS9601).